Reading from the N-terminus, the 279-residue chain is Cell division protein FtsQ (279 aa).

A disordered region spans residues 1-28 (MTPMKKQLDKSLGSRRGATATRAKERAD). Residues 1 to 48 (MTPMKKQLDKSLGSRRGATATRAKERADNRNTGPAAIVRLLAFIPWNR) are Cytoplasmic-facing. The chain crosses the membrane as a helical span at residues 49–69 (VLLHVSIFCFWLLVLSALIAG). Topologically, residues 70-279 (VKWLDRPVAT…WKADVTPEQG (210 aa)) are periplasmic. A POTRA domain is found at 75–144 (RPVATVQVVG…DAVQVDLEEE (70 aa)).

The protein belongs to the FtsQ/DivIB family. FtsQ subfamily. Part of a complex composed of FtsB, FtsL and FtsQ.

The protein resides in the cell inner membrane. Its function is as follows. Essential cell division protein. May link together the upstream cell division proteins, which are predominantly cytoplasmic, with the downstream cell division proteins, which are predominantly periplasmic. May control correct divisome assembly. The protein is Cell division protein FtsQ of Hahella chejuensis (strain KCTC 2396).